The primary structure comprises 449 residues: MQVTVNERDAVQSVATAHPAANGESHGHGMDKLVIEGGHRLSGEIVVSGAKNAALPILCAGLLTGDPVDLDNVPNLKDVRTTLKVLNQMGVKSETDGCRVQLDASRVDNLVAPYELVKTMRASILVLGPLLARFGEAKVSLPGGCAIGARPVDQHIKGLQAMGAEISIEHGFIEARAKRLKGARIVTDMITVTGTENLLMAATLADGETVIENAAREPEVSDLAHLLVAMGAKIDGIGTDRLVIQGVERLHGARHSVIPDRIEAGTFLCAVAAAGGDVRLTGVRPHILDAVIDKLREAGVSIEEGDSWLRVKMDRRPSAVTIRTSEYPAFPTDMQAQFMALNTVATGTAQVVETIFENRFMHVQELNRLGANITIDGNTALVTGVDKLSGANVMATDLRASASLVIAGLRAEGETLVDRIYHLDRGYDRMEAKLTAVGANVRRLSGSQA.

Residue 51-52 (KN) coordinates phosphoenolpyruvate. R121 serves as a coordination point for UDP-N-acetyl-alpha-D-glucosamine. C145 functions as the Proton donor in the catalytic mechanism. A 2-(S-cysteinyl)pyruvic acid O-phosphothioketal modification is found at C145. Residues 150 to 154 (RPVDQ), D333, and I355 contribute to the UDP-N-acetyl-alpha-D-glucosamine site.

Belongs to the EPSP synthase family. MurA subfamily.

The protein resides in the cytoplasm. It catalyses the reaction phosphoenolpyruvate + UDP-N-acetyl-alpha-D-glucosamine = UDP-N-acetyl-3-O-(1-carboxyvinyl)-alpha-D-glucosamine + phosphate. The protein operates within cell wall biogenesis; peptidoglycan biosynthesis. Its function is as follows. Cell wall formation. Adds enolpyruvyl to UDP-N-acetylglucosamine. The sequence is that of UDP-N-acetylglucosamine 1-carboxyvinyltransferase from Burkholderia lata (strain ATCC 17760 / DSM 23089 / LMG 22485 / NCIMB 9086 / R18194 / 383).